A 160-amino-acid polypeptide reads, in one-letter code: Cytochrome b6-f complex subunit 4 (160 aa).

A run of 3 helical transmembrane segments spans residues 36-56 (LLYI…GLSV), 95-115 (LLGV…PFIE), and 131-151 (TVFL…TFPI).

The protein belongs to the cytochrome b family. PetD subfamily. As to quaternary structure, the 4 large subunits of the cytochrome b6-f complex are cytochrome b6, subunit IV (17 kDa polypeptide, petD), cytochrome f and the Rieske protein, while the 4 small subunits are petG, petL, petM and petN. The complex functions as a dimer.

It localises to the plastid. It is found in the chloroplast thylakoid membrane. In terms of biological role, component of the cytochrome b6-f complex, which mediates electron transfer between photosystem II (PSII) and photosystem I (PSI), cyclic electron flow around PSI, and state transitions. The sequence is that of Cytochrome b6-f complex subunit 4 from Stigeoclonium helveticum (Green alga).